The sequence spans 284 residues: Bifunctional protein FolD (284 aa).

NADP(+)-binding positions include 166–168 and isoleucine 232; that span reads GAS.

This sequence belongs to the tetrahydrofolate dehydrogenase/cyclohydrolase family. As to quaternary structure, homodimer.

The enzyme catalyses (6R)-5,10-methylene-5,6,7,8-tetrahydrofolate + NADP(+) = (6R)-5,10-methenyltetrahydrofolate + NADPH. It catalyses the reaction (6R)-5,10-methenyltetrahydrofolate + H2O = (6R)-10-formyltetrahydrofolate + H(+). The protein operates within one-carbon metabolism; tetrahydrofolate interconversion. Catalyzes the oxidation of 5,10-methylenetetrahydrofolate to 5,10-methenyltetrahydrofolate and then the hydrolysis of 5,10-methenyltetrahydrofolate to 10-formyltetrahydrofolate. The protein is Bifunctional protein FolD of Azotobacter vinelandii (strain DJ / ATCC BAA-1303).